A 518-amino-acid polypeptide reads, in one-letter code: ATP synthase subunit beta 2 (518 aa).

154–161 (GGAGVGKT) contacts ATP. The tract at residues 455–518 (IDEAKGKAKP…TDHAADTHES (64 aa)) is disordered. Composition is skewed to basic and acidic residues over residues 473-485 (PDSKTEARADPKP) and 507-518 (PETDHAADTHES).

This sequence belongs to the ATPase alpha/beta chains family. As to quaternary structure, F-type ATPases have 2 components, CF(1) - the catalytic core - and CF(0) - the membrane proton channel. CF(1) has five subunits: alpha(3), beta(3), gamma(1), delta(1), epsilon(1). CF(0) has three main subunits: a(1), b(2) and c(9-12). The alpha and beta chains form an alternating ring which encloses part of the gamma chain. CF(1) is attached to CF(0) by a central stalk formed by the gamma and epsilon chains, while a peripheral stalk is formed by the delta and b chains.

It is found in the cell inner membrane. The enzyme catalyses ATP + H2O + 4 H(+)(in) = ADP + phosphate + 5 H(+)(out). Functionally, produces ATP from ADP in the presence of a proton gradient across the membrane. The catalytic sites are hosted primarily by the beta subunits. This chain is ATP synthase subunit beta 2, found in Albidiferax ferrireducens (strain ATCC BAA-621 / DSM 15236 / T118) (Rhodoferax ferrireducens).